The primary structure comprises 266 residues: Imidazole glycerol phosphate synthase subunit HisF (266 aa).

Catalysis depends on residues Asp11 and Asp130.

Belongs to the HisA/HisF family. Heterodimer of HisH and HisF.

The protein resides in the cytoplasm. The enzyme catalyses 5-[(5-phospho-1-deoxy-D-ribulos-1-ylimino)methylamino]-1-(5-phospho-beta-D-ribosyl)imidazole-4-carboxamide + L-glutamine = D-erythro-1-(imidazol-4-yl)glycerol 3-phosphate + 5-amino-1-(5-phospho-beta-D-ribosyl)imidazole-4-carboxamide + L-glutamate + H(+). Its pathway is amino-acid biosynthesis; L-histidine biosynthesis; L-histidine from 5-phospho-alpha-D-ribose 1-diphosphate: step 5/9. Its function is as follows. IGPS catalyzes the conversion of PRFAR and glutamine to IGP, AICAR and glutamate. The HisF subunit catalyzes the cyclization activity that produces IGP and AICAR from PRFAR using the ammonia provided by the HisH subunit. This chain is Imidazole glycerol phosphate synthase subunit HisF, found in Delftia acidovorans (strain DSM 14801 / SPH-1).